A 743-amino-acid chain; its full sequence is Keratin, type I cytoskeletal 9 (743 aa).

Positions 1–16 (MSCRQSSSSFWSSSSS) are enriched in low complexity. Positions 1 to 46 (MSCRQSSSSFWSSSSSCGGGGGRGGSGGSMRSSFSRSSRAGGGGGG) are disordered. A head region spans residues 1 to 130 (MSCRQSSSSF…GGEGGILNTN (130 aa)). 2 positions are modified to phosphoserine: S14 and S16. Residues 17-28 (CGGGGGRGGSGG) show a composition bias toward gly residues. The segment covering 29 to 39 (SMRSSFSRSSR) has biased composition (low complexity). S55 and S155 each carry phosphoserine. A coil 1A region spans residues 131–166 (EKIVMQNLNSRLASYMEKVLELEESNTAMEKQIQDW). Positions 131–443 (EKIVMQNLNS…ELLEGGQQDF (313 aa)) constitute an IF rod domain. Residues 167–185 (YSKRGPKVFQKDNTHYYDT) are linker 1. The tract at residues 186-277 (IEDLKDRIVD…KNHKEEMSQL (92 aa)) is coil 1B. Positions 278–300 (TGQNDGDVNVEINVAPSTDLTRV) are linker 12. Residues 301–439 (LNDMREEYEQ…ETYRELLEGG (139 aa)) form a coil 2 region. Disordered stretches follow at residues 440–468 (QQDF…GSYG) and 501–743 (GGSG…KMRY). The interval 440-709 (QQDFESSGAG…GGGSGSGGGS (270 aa)) is tail. Composition is skewed to gly residues over residues 449–468 (GQIG…GSYG) and 501–717 (GGSG…GGGN).

This sequence belongs to the intermediate filament family. As to quaternary structure, heterotetramer of two type I and two type II keratins. In terms of tissue distribution, expressed in footpad epidermis and testis (at protein level).

Functionally, may serve an important special function either in the mature palmar and plantar skin tissue or in the morphogenetic program of the formation of these tissues. Plays a role in keratin filament assembly. Plays an essential role in the correct development of sperm. The polypeptide is Keratin, type I cytoskeletal 9 (Mus musculus (Mouse)).